The following is a 319-amino-acid chain: MDPQNQHGSGSSLVVIQQPALDNRQRLDYEREIQPAAILSLDQIKAIRGSNEYTEGPSVVKRPAPRTAPRQEKHERTHEIIPINVNNNYEHRPTSHLGHTGLSNNTRGPILSRSTSTGSAASSGSNSSASSEQGLLGRSPPTRPIPGHRSERAIRTQPKQLIVDDLKGSLKEDLTQHKFICEQCGKCKCGECTAPRTLPSCLACNRQCLCSAESMVEYGTCMCLVKGIFYHCSNDDEGDSYSDNPCSCSQSQCCSRYLCMGAMSLFLPCLLCYPPAKGCLKLCKGCYDWIHRPGCRCENSNTVYCKLESCSSRGLGKPS.

Met-1 bears the N-acetylmethionine mark. Residues 54–160 are disordered; sequence TEGPSVVKRP…ERAIRTQPKQ (107 aa). Residues 69–79 show a composition bias toward basic and acidic residues; that stretch reads PRQEKHERTHE. Residues 112-131 are compositionally biased toward low complexity; sequence SRSTSTGSAASSGSNSSASS. The region spanning 183 to 295 is the SPR domain; sequence QCGKCKCGEC…CYDWIHRPGC (113 aa).

This sequence belongs to the sprouty family. Forms heterodimers with SPRY2. Interacts with TESK1. Interacts with CAV1 (via C-terminus).

It localises to the cytoplasm. The protein resides in the membrane. Its function is as follows. Inhibits fibroblast growth factor (FGF)-induced retinal lens fiber differentiation, probably by inhibiting FGF-mediated phosphorylation of ERK1/2. Inhibits TGFB-induced epithelial-to-mesenchymal transition in lens epithelial cells. The protein is Protein sprouty homolog 1 (SPRY1) of Cervus elaphus (Red deer).